The chain runs to 372 residues: Putative glutamate--cysteine ligase 2 (372 aa).

Belongs to the glutamate--cysteine ligase type 2 family. YbdK subfamily. Homodimer.

The catalysed reaction is L-cysteine + L-glutamate + ATP = gamma-L-glutamyl-L-cysteine + ADP + phosphate + H(+). ATP-dependent carboxylate-amine ligase which exhibits weak glutamate--cysteine ligase activity. In Salmonella typhimurium (strain LT2 / SGSC1412 / ATCC 700720), this protein is Putative glutamate--cysteine ligase 2 (ybdK).